We begin with the raw amino-acid sequence, 250 residues long: Probable transcriptional regulatory protein Plut_1643 (250 aa).

This sequence belongs to the TACO1 family.

The protein resides in the cytoplasm. The chain is Probable transcriptional regulatory protein Plut_1643 from Chlorobium luteolum (strain DSM 273 / BCRC 81028 / 2530) (Pelodictyon luteolum).